The chain runs to 255 residues: Large ribosomal subunit protein uL6m (255 aa).

The interval 39–61 is disordered; it reads AARRNFSATTTRPSKLGRTPLSI.

This sequence belongs to the universal ribosomal protein uL6 family. In terms of assembly, component of the mitochondrial large ribosomal subunit (mt-LSU). Mature N.crassa 74S mitochondrial ribosomes consist of a small (37S) and a large (54S) subunit. The 37S small subunit contains a 16S ribosomal RNA (16S mt-rRNA) and 32 different proteins. The 54S large subunit contains a 23S rRNA (23S mt-rRNA) and 42 different proteins.

Its subcellular location is the mitochondrion. Component of the mitochondrial ribosome (mitoribosome), a dedicated translation machinery responsible for the synthesis of mitochondrial genome-encoded proteins, including at least some of the essential transmembrane subunits of the mitochondrial respiratory chain. The mitoribosomes are attached to the mitochondrial inner membrane and translation products are cotranslationally integrated into the membrane. This Neurospora crassa (strain ATCC 24698 / 74-OR23-1A / CBS 708.71 / DSM 1257 / FGSC 987) protein is Large ribosomal subunit protein uL6m (mrpl6).